The sequence spans 178 residues: MSGGKYIDSEGLLYSAPIREQGNIYKPNNKSMADEMNEKQMYDAHTKEIDLVNRDPKHLNDDMVKIDFEDVIAEPEGTHSFDGIWKASFTTFTVTKYWFYRLLSALFGIPMALIWGIYFAILSFLHIWAVVPCIRSYLIEIQCISRIYSICIHTFCDPLFEAIGKIFSNVRIALQKEI.

At S2 the chain carries N-acetylserine. Position 2 is a phosphoserine (S2). Positions 2 to 94 are required for homooligomerization; that stretch reads SGGKYIDSEG…WKASFTTFTV (93 aa). The Cytoplasmic portion of the chain corresponds to 2–104; that stretch reads SGGKYIDSEG…TKYWFYRLLS (103 aa). N6-acetyllysine; alternate is present on K5. A Glycyl lysine isopeptide (Lys-Gly) (interchain with G-Cter in ubiquitin); alternate cross-link involves residue K5. Y6 is modified (phosphotyrosine). S9 carries the post-translational modification Phosphoserine. A Phosphotyrosine; by ABL1 modification is found at Y14. Y25 carries the phosphotyrosine modification. Glycyl lysine isopeptide (Lys-Gly) (interchain with G-Cter in ubiquitin) cross-links involve residues K26, K30, K39, K47, and K57. The tract at residues 82–94 is interaction with CAVIN3; sequence DGIWKASFTTFTV. An intramembrane region (helical) is located at residues 105–125; the sequence is ALFGIPMALIWGIYFAILSFL. At 126–178 the chain is on the cytoplasmic side; that stretch reads HIWAVVPCIRSYLIEIQCISRIYSICIHTFCDPLFEAIGKIFSNVRIALQKEI. The interacts with SPRY1, SPRY2, SPRY3 and SPRY4 stretch occupies residues 131-142; that stretch reads VPCIRSYLIEIQ. S-palmitoyl cysteine attachment occurs at residues C133, C143, and C156. The interval 149–160 is interacts with SPRY1, SPRY2, and SPRY4; that stretch reads SICIHTFCDPLF. The interacts with SPRY1, SPRY2, SPRY3 and SPRY4 stretch occupies residues 167-178; sequence FSNVRIALQKEI.

It belongs to the caveolin family. As to quaternary structure, homooligomer. Interacts with GLIPR2. Interacts with NOSTRIN. Interacts with SNAP25 and STX1A. Interacts (via the N-terminus) with DPP4; the interaction is direct. Interacts with CTNNB1, CDH1 and JUP. Interacts with PACSIN2; this interaction induces membrane tubulation. Interacts with SLC7A9. Interacts with BMX and BTK. Interacts with TGFBR1. Interacts with CAVIN3 (via leucine-zipper domain) in a cholesterol-sensitive manner. Interacts with CAVIN1. Interacts with EHD2 in a cholesterol-dependent manner. Forms a ternary complex with UBXN6 and VCP; mediates CAV1 targeting to lysosomes for degradation. Interacts with ABCG1; this interaction regulates ABCG1-mediated cholesterol efflux. Interacts with NEU3; this interaction enhances NEU3 sialidase activity within caveola. Interacts (via C-terminus) with SPRY1, SPRY2 (via C-terminus), SPRY3, and SPRY4. Interacts with IGFBP5; this interaction allows trafficking of IGFBP5 from the plasma membrane to the nucleus. Phosphorylated at Tyr-14 by ABL1 in response to oxidative stress. Post-translationally, ubiquitinated. Undergo monoubiquitination and multi- and/or polyubiquitination. Monoubiquitination of N-terminal lysines promotes integration in a ternary complex with UBXN6 and VCP which promotes oligomeric CAV1 targeting to lysosomes for degradation. Ubiquitinated by ZNRF1; leading to degradation and modulation of the TLR4-mediated immune response.

It is found in the golgi apparatus membrane. Its subcellular location is the cell membrane. The protein localises to the membrane. The protein resides in the caveola. It localises to the membrane raft. May act as a scaffolding protein within caveolar membranes. Forms a stable heterooligomeric complex with CAV2 that targets to lipid rafts and drives caveolae formation. Mediates the recruitment of CAVIN proteins (CAVIN1/2/3/4) to the caveolae. Interacts directly with G-protein alpha subunits and can functionally regulate their activity. Involved in the costimulatory signal essential for T-cell receptor (TCR)-mediated T-cell activation. Its binding to DPP4 induces T-cell proliferation and NF-kappa-B activation in a T-cell receptor/CD3-dependent manner. Recruits CTNNB1 to caveolar membranes and may regulate CTNNB1-mediated signaling through the Wnt pathway. Negatively regulates TGFB1-mediated activation of SMAD2/3 by mediating the internalization of TGFBR1 from membrane rafts leading to its subsequent degradation. Binds 20(S)-hydroxycholesterol (20(S)-OHC). The sequence is that of Caveolin-1 (CAV1) from Didelphis virginiana (North American opossum).